A 251-amino-acid polypeptide reads, in one-letter code: Triosephosphate isomerase (251 aa).

9–11 (NWK) serves as a coordination point for substrate. Catalysis depends on His-95, which acts as the Electrophile. Catalysis depends on Glu-167, which acts as the Proton acceptor. Substrate is bound by residues Gly-173, Ser-213, and 234–235 (GG). Position 213 is a phosphoserine (Ser-213).

It belongs to the triosephosphate isomerase family. As to quaternary structure, homodimer.

The protein localises to the cytoplasm. The catalysed reaction is D-glyceraldehyde 3-phosphate = dihydroxyacetone phosphate. The protein operates within carbohydrate biosynthesis; gluconeogenesis. It participates in carbohydrate degradation; glycolysis; D-glyceraldehyde 3-phosphate from glycerone phosphate: step 1/1. Its function is as follows. Involved in the gluconeogenesis. Catalyzes stereospecifically the conversion of dihydroxyacetone phosphate (DHAP) to D-glyceraldehyde-3-phosphate (G3P). The protein is Triosephosphate isomerase of Bacillus anthracis.